The sequence spans 82 residues: KSIFERDRRDWLVIPDAIAAYIYETVNKMSPRVGQFLADAAQTPVVVGTRTFLIRETSKLTLLAEQLMEKIKNLWYTKVLGY.

It belongs to the apovitellenin family. As to quaternary structure, monomer. Found in egg yolk and in plasma.

Protein component of the very low density lipoprotein (VLDL) of egg-laying females. Potent lipoprotein lipase inhibitor, preventing the loss of triglycerides from VLDL on their way from the liver to the growing oocytes. This chain is Apovitellenin-1, found in Anas platyrhynchos (Mallard).